We begin with the raw amino-acid sequence, 195 residues long: MNINPNNIDLIISAVQEAQYPDTGLSEVALSGRSNVGKSSFINSMIGRKNMARTSQQPGKTQTLNFFNIDDQLIFVDVPGYGYAKVSKSQREKFGKMIEEYLTKRESLKLVIQLVDLRHNPTEDDVLMYNYLKHFDIPTLVICTKEDKIAKGKIQKHIKNIKEKLDLDPDDTIISYSSIQNTKQQQIWDLIANYL.

The region spanning 24–195 (GLSEVALSGR…QIWDLIANYL (172 aa)) is the EngB-type G domain. GTP-binding positions include 32–39 (GRSNVGKS), 59–63 (GKTQT), 77–80 (DVPG), 144–147 (TKED), and 176–178 (YSS). The Mg(2+) site is built by Ser39 and Thr61.

It belongs to the TRAFAC class TrmE-Era-EngA-EngB-Septin-like GTPase superfamily. EngB GTPase family. The cofactor is Mg(2+).

Functionally, necessary for normal cell division and for the maintenance of normal septation. The chain is Probable GTP-binding protein EngB from Staphylococcus haemolyticus (strain JCSC1435).